Here is a 240-residue protein sequence, read N- to C-terminus: Sugar fermentation stimulation protein homolog (240 aa).

This sequence belongs to the SfsA family.

This is Sugar fermentation stimulation protein homolog from Methanothermobacter thermautotrophicus (strain ATCC 29096 / DSM 1053 / JCM 10044 / NBRC 100330 / Delta H) (Methanobacterium thermoautotrophicum).